Consider the following 357-residue polypeptide: O-methyltransferase 9 (357 aa).

S-adenosyl-L-methionine-binding residues include G200, D224, N249, F250, and K263. H267 serves as the catalytic Proton acceptor.

It belongs to the class I-like SAM-binding methyltransferase superfamily. Cation-independent O-methyltransferase family. COMT subfamily.

The enzyme catalyses (3,5-dichloro-2,4,6-trihydroxyphenyl)hexan-1-one + S-adenosyl-L-methionine = 1-(3,5-dichloro-2,6-dihydroxy-4-methoxyphenyl)hexan-1-one + S-adenosyl-L-homocysteine + H(+). In Dictyostelium discoideum (Social amoeba), this protein is O-methyltransferase 9 (omt9).